A 427-amino-acid polypeptide reads, in one-letter code: 3-phosphoshikimate 1-carboxyvinyltransferase (427 aa).

3-phosphoshikimate is bound by residues K22, S23, and R27. K22 lines the phosphoenolpyruvate pocket. Residues G96 and R124 each contribute to the phosphoenolpyruvate site. S169, S170, Q171, S197, D313, N336, and K340 together coordinate 3-phosphoshikimate. A phosphoenolpyruvate-binding site is contributed by Q171. The active-site Proton acceptor is the D313. Phosphoenolpyruvate is bound by residues R344, R386, and K411.

This sequence belongs to the EPSP synthase family. As to quaternary structure, monomer.

The protein resides in the cytoplasm. The enzyme catalyses 3-phosphoshikimate + phosphoenolpyruvate = 5-O-(1-carboxyvinyl)-3-phosphoshikimate + phosphate. The protein operates within metabolic intermediate biosynthesis; chorismate biosynthesis; chorismate from D-erythrose 4-phosphate and phosphoenolpyruvate: step 6/7. Catalyzes the transfer of the enolpyruvyl moiety of phosphoenolpyruvate (PEP) to the 5-hydroxyl of shikimate-3-phosphate (S3P) to produce enolpyruvyl shikimate-3-phosphate and inorganic phosphate. The sequence is that of 3-phosphoshikimate 1-carboxyvinyltransferase from Salmonella typhimurium (strain LT2 / SGSC1412 / ATCC 700720).